Reading from the N-terminus, the 78-residue chain is Beta-defensin 105A (78 aa).

The first 27 residues, 1–27, serve as a signal peptide directing secretion; sequence MALIKKTFFFLFAMFFILVQLSSGCQA. Disulfide bonds link Cys43–Cys74, Cys53–Cys67, and Cys57–Cys73.

The protein belongs to the beta-defensin family.

The protein localises to the secreted. Has antimicrobial activity. This chain is Beta-defensin 105A (DEFB105A), found in Pan troglodytes (Chimpanzee).